The sequence spans 125 residues: Large ribosomal subunit protein bL12 (125 aa).

Belongs to the bacterial ribosomal protein bL12 family. Homodimer. Part of the ribosomal stalk of the 50S ribosomal subunit. Forms a multimeric L10(L12)X complex, where L10 forms an elongated spine to which 2 to 4 L12 dimers bind in a sequential fashion. Binds GTP-bound translation factors.

Its function is as follows. Forms part of the ribosomal stalk which helps the ribosome interact with GTP-bound translation factors. Is thus essential for accurate translation. The polypeptide is Large ribosomal subunit protein bL12 (Rickettsia africae (strain ESF-5)).